A 160-amino-acid polypeptide reads, in one-letter code: Phosphopantetheine adenylyltransferase (160 aa).

Ser10 serves as a coordination point for substrate. Residues Ser10–Phe11 and His18 contribute to the ATP site. The substrate site is built by Lys42, Leu74, and Arg88. ATP is bound by residues Gly89 to Arg91, Glu99, and Tyr124 to Ser130.

The protein belongs to the bacterial CoaD family. As to quaternary structure, homohexamer. Mg(2+) serves as cofactor.

It is found in the cytoplasm. It catalyses the reaction (R)-4'-phosphopantetheine + ATP + H(+) = 3'-dephospho-CoA + diphosphate. It participates in cofactor biosynthesis; coenzyme A biosynthesis; CoA from (R)-pantothenate: step 4/5. Its function is as follows. Reversibly transfers an adenylyl group from ATP to 4'-phosphopantetheine, yielding dephospho-CoA (dPCoA) and pyrophosphate. This chain is Phosphopantetheine adenylyltransferase, found in Bacillus velezensis (strain DSM 23117 / BGSC 10A6 / LMG 26770 / FZB42) (Bacillus amyloliquefaciens subsp. plantarum).